The chain runs to 224 residues: UPF0758 protein Avin_02940 (224 aa).

An MPN domain is found at 102-224; sequence ALESPQAVRD…PLSMAEQGWL (123 aa). The Zn(2+) site is built by His-173, His-175, and Asp-186. Positions 173–186 match the JAMM motif motif; that stretch reads HNHPSGIAEPSQAD.

This sequence belongs to the UPF0758 family.

The sequence is that of UPF0758 protein Avin_02940 from Azotobacter vinelandii (strain DJ / ATCC BAA-1303).